Here is a 520-residue protein sequence, read N- to C-terminus: Peptide chain release factor 3 (520 aa).

In terms of domain architecture, tr-type G spans 8-277 (ESRKTFAIIS…HAPMPNARQT (270 aa)). GTP contacts are provided by residues 17–24 (SHPDAGKT), 85–89 (DTPGH), and 139–142 (NKLD).

This sequence belongs to the TRAFAC class translation factor GTPase superfamily. Classic translation factor GTPase family. PrfC subfamily.

The protein localises to the cytoplasm. In terms of biological role, increases the formation of ribosomal termination complexes and stimulates activities of RF-1 and RF-2. It binds guanine nucleotides and has strong preference for UGA stop codons. It may interact directly with the ribosome. The stimulation of RF-1 and RF-2 is significantly reduced by GTP and GDP, but not by GMP. The chain is Peptide chain release factor 3 from Staphylococcus haemolyticus (strain JCSC1435).